The chain runs to 288 residues: Sulfur carrier protein FdhD (288 aa).

The interval 1-23 is disordered; the sequence is MMRCMQSPEVHPAAAGDAEPPTH. Residue C127 is the Cysteine persulfide intermediate of the active site.

This sequence belongs to the FdhD family.

The protein resides in the cytoplasm. Required for formate dehydrogenase (FDH) activity. Acts as a sulfur carrier protein that transfers sulfur from IscS to the molybdenum cofactor prior to its insertion into FDH. The protein is Sulfur carrier protein FdhD of Cupriavidus necator (strain ATCC 17699 / DSM 428 / KCTC 22496 / NCIMB 10442 / H16 / Stanier 337) (Ralstonia eutropha).